The sequence spans 257 residues: 1-(5-phosphoribosyl)-5-[(5-phosphoribosylamino)methylideneamino] imidazole-4-carboxamide isomerase (257 aa).

Catalysis depends on Asp8, which acts as the Proton acceptor. The active-site Proton donor is the Asp129.

It belongs to the HisA/HisF family.

It localises to the cytoplasm. It catalyses the reaction 1-(5-phospho-beta-D-ribosyl)-5-[(5-phospho-beta-D-ribosylamino)methylideneamino]imidazole-4-carboxamide = 5-[(5-phospho-1-deoxy-D-ribulos-1-ylimino)methylamino]-1-(5-phospho-beta-D-ribosyl)imidazole-4-carboxamide. It functions in the pathway amino-acid biosynthesis; L-histidine biosynthesis; L-histidine from 5-phospho-alpha-D-ribose 1-diphosphate: step 4/9. The polypeptide is 1-(5-phosphoribosyl)-5-[(5-phosphoribosylamino)methylideneamino] imidazole-4-carboxamide isomerase (Rippkaea orientalis (strain PCC 8801 / RF-1) (Cyanothece sp. (strain PCC 8801))).